Reading from the N-terminus, the 225-residue chain is Uridylate kinase (225 aa).

9–10 (GS) provides a ligand contact to ATP. Glycine 44 contributes to the UMP binding site. ATP contacts are provided by glycine 45 and arginine 49. UMP is bound by residues aspartate 66 and 114-120 (THPGHTT). Residues threonine 140, asparagine 141, tyrosine 146, and aspartate 149 each coordinate ATP.

It belongs to the UMP kinase family. Homohexamer.

It localises to the cytoplasm. It carries out the reaction UMP + ATP = UDP + ADP. The protein operates within pyrimidine metabolism; CTP biosynthesis via de novo pathway; UDP from UMP (UMPK route): step 1/1. With respect to regulation, inhibited by UTP. Catalyzes the reversible phosphorylation of UMP to UDP. This is Uridylate kinase from Thermococcus sibiricus (strain DSM 12597 / MM 739).